We begin with the raw amino-acid sequence, 305 residues long: Thyroxine 5-deiodinase (305 aa).

Topologically, residues 1-43 (MPGQAGRRRLVGGGCRGSQGPLGGAATMLRSLLLHSLRLCAQT) are cytoplasmic. A helical; Signal-anchor for type II membrane protein transmembrane segment spans residues 44–63 (ASCLVLFPRFLGTACMLWLL). Residues 64–305 (DFLCIRKHLL…QLHGPQPRRV (242 aa)) lie on the Extracellular side of the membrane. The tract at residues 79-98 (GEPETEVELNSDGDEVPPDD) is disordered. The segment covering 82 to 96 (ETEVELNSDGDEVPP) has biased composition (acidic residues). The active site involves U171. Position 171 (U171) is a non-standard amino acid, selenocysteine.

The protein belongs to the iodothyronine deiodinase family. As to quaternary structure, monomer. Homodimer. May undergo minor heretodimerization with DIO1 and DIO2. Expressed in brain only.

It is found in the cell membrane. Its subcellular location is the endosome membrane. It carries out the reaction 3,3',5'-triiodo-L-thyronine + iodide + A + H(+) = L-thyroxine + AH2. The catalysed reaction is 3,3'-diiodo-L-thyronine + iodide + A + H(+) = 3,3',5-triiodo-L-thyronine + AH2. It catalyses the reaction 3-iodo-L-thyronine + iodide + A + H(+) = 3,5-diiodo-L-thyronine + AH2. The enzyme catalyses L-thyronine + iodide + A + H(+) = 3-iodo-L-thyronine + AH2. It carries out the reaction 3',5'-diiodo-L-thyronine + iodide + A + H(+) = 3,3',5'-triiodo-L-thyronine + AH2. The catalysed reaction is 3'-iodo-L-thyronine + iodide + A + H(+) = 3,3'-diiodo-L-thyronine + AH2. It catalyses the reaction 3,3',5'-triiodothyronamine + iodide + A + H(+) = 3,3',5,5'-tetraiodothyronamine + AH2. The enzyme catalyses 3',5'-diiodothyronamine + iodide + A + H(+) = 3,3',5'-triiodothyronamine + AH2. It carries out the reaction 3,3'-diiodothyronamine + iodide + A + H(+) = 3,3',5-triiodothyronamine + AH2. The catalysed reaction is 3-iodothyronamine + iodide + A + H(+) = 3,5-diiodothyronamine + AH2. It catalyses the reaction 3'-iodothyronamine + iodide + A + H(+) = 3,3'-diiodothyronamine + AH2. The enzyme catalyses thyronamine + iodide + A + H(+) = 3-iodothyronamine + AH2. In terms of biological role, plays a crucial role in the metabolism of thyroid hormones (TH) and has specific roles in TH activation and inactivation by deiodination, particularly in different tissues. Catalyzes the deiodination of L-thyroxine (T4) to 3,3',5'-triiodothyronine (rT3), 3,5-diiodothyronine (3,5-T2) to 3-monoiodothyronine (3-T1), rT3 to 3',5'-diiodothyronine (3',5'-T2) and 3,3'-diiodothyronine (3,3'-T2) to 3'-monoiodothyronine (3'-T1) via inner-ring deiodination (IRD). Catalyzes the deiodination of 3,5,3'-triiodothyronine (T3) to 3,3'-diiodothyronine (3,3'-T2) via IRD. Catalyzes the deiodination of 3-T1 to L-thyronine (T0) via outer-ring deiodination (ORD). Catalyzes the tyrosyl ring deiodinations of 3,3',5,5'-tetraiodothyronamine, 3,3',5'-triiodothyronamine, 3,5,3'-triiodothyronamine, 3,5-diiodothyronamine, 3,3'-diiodothyronamine and 3-iodothyronamine. This chain is Thyroxine 5-deiodinase (DIO3), found in Sus scrofa (Pig).